The sequence spans 220 residues: UPF0319 protein Asuc_1002 (220 aa).

The N-terminal stretch at M1–A21 is a signal peptide.

This sequence belongs to the UPF0319 family.

This Actinobacillus succinogenes (strain ATCC 55618 / DSM 22257 / CCUG 43843 / 130Z) protein is UPF0319 protein Asuc_1002.